The chain runs to 321 residues: tRNA uridine(34) hydroxylase (321 aa).

Positions 123–217 (SDPDVTVIDT…YLEEVPEGNS (95 aa)) constitute a Rhodanese domain. Catalysis depends on cysteine 177, which acts as the Cysteine persulfide intermediate. Over residues 294 to 308 (RKGELHIGDRADIAK) the composition is skewed to basic and acidic residues. The segment at 294–321 (RKGELHIGDRADIAKSRTTQGAPSADGE) is disordered.

Belongs to the TrhO family.

It carries out the reaction uridine(34) in tRNA + AH2 + O2 = 5-hydroxyuridine(34) in tRNA + A + H2O. Catalyzes oxygen-dependent 5-hydroxyuridine (ho5U) modification at position 34 in tRNAs. In Teredinibacter turnerae (strain ATCC 39867 / T7901), this protein is tRNA uridine(34) hydroxylase.